The sequence spans 122 residues: Large ribosomal subunit protein uL14 (122 aa).

It belongs to the universal ribosomal protein uL14 family. Part of the 50S ribosomal subunit. Forms a cluster with proteins L3 and L19. In the 70S ribosome, L14 and L19 interact and together make contacts with the 16S rRNA in bridges B5 and B8.

In terms of biological role, binds to 23S rRNA. Forms part of two intersubunit bridges in the 70S ribosome. This Thioalkalivibrio sulfidiphilus (strain HL-EbGR7) protein is Large ribosomal subunit protein uL14.